Reading from the N-terminus, the 336-residue chain is DNA-directed RNA polymerase subunit alpha (336 aa).

The interval 1-235 (MIEFVIPKKL…HFKIVTEGLP (235 aa)) is alpha N-terminal domain (alpha-NTD). Residues 264–336 (RENSDVYNRK…KFGLELRKGE (73 aa)) are alpha C-terminal domain (alpha-CTD).

The protein belongs to the RNA polymerase alpha chain family. Homodimer. The RNAP catalytic core consists of 2 alpha, 1 beta, 1 beta' and 1 omega subunit. When a sigma factor is associated with the core the holoenzyme is formed, which can initiate transcription.

The enzyme catalyses RNA(n) + a ribonucleoside 5'-triphosphate = RNA(n+1) + diphosphate. Functionally, DNA-dependent RNA polymerase catalyzes the transcription of DNA into RNA using the four ribonucleoside triphosphates as substrates. This chain is DNA-directed RNA polymerase subunit alpha, found in Thermotoga maritima (strain ATCC 43589 / DSM 3109 / JCM 10099 / NBRC 100826 / MSB8).